The primary structure comprises 271 residues: uncharacterized protein (271 aa).

The segment at M1–G202 is disordered. Residues P10–K23 are compositionally biased toward basic and acidic residues. 2 stretches are compositionally biased toward low complexity: residues R33–P50 and G59–P73. Positions T92 to Q101 are enriched in polar residues. A compositionally biased stretch (basic residues) spans L121 to P142.

This is an uncharacterized protein from Homo sapiens (Human).